A 337-amino-acid chain; its full sequence is HTH-type transcriptional repressor PurR (337 aa).

In terms of domain architecture, HTH lacI-type spans 2-56; that stretch reads ATIKDVAKLAAVSTTTVSHVINKTRFVAEATQKRVWEAVEELNYAPSAVARSLKC. The H-T-H motif DNA-binding region spans 4 to 23; sequence IKDVAKLAAVSTTTVSHVIN. Residues 48–56 mediate DNA binding; that stretch reads SAVARSLKC. Hypoxanthine contacts are provided by Phe-73, Lys-189, Thr-191, Phe-220, and Asp-276.

Homodimer.

It functions in the pathway purine metabolism; purine nucleotide biosynthesis [regulation]. Is the main repressor of the genes involved in the de novo synthesis of purine nucleotides, regulating purB, purC, purEK, purF, purHD, purL, purMN and guaBA expression. PurR is allosterically activated to bind its cognate DNA by binding the purine corepressors, hypoxanthine or guanine, thereby effecting transcription repression. The protein is HTH-type transcriptional repressor PurR of Aliivibrio fischeri (strain MJ11) (Vibrio fischeri).